The following is a 295-amino-acid chain: Sulfotransferase 1E1 (295 aa).

48 to 53 (KSGTTW) serves as a coordination point for 3'-phosphoadenylyl sulfate. 106 to 108 (KSH) is a binding site for substrate. Histidine 108 functions as the Proton acceptor in the catalytic mechanism. Residues arginine 130, serine 138, and tyrosine 193 each contribute to the 3'-phosphoadenylyl sulfate site. A phosphoserine; by PKA mark is found at serine 216 and serine 228. 3'-phosphoadenylyl sulfate is bound by residues 227-232 (TSFQEM) and 257-259 (RKG).

The protein belongs to the sulfotransferase 1 family. As to quaternary structure, homodimer.

It localises to the cytoplasm. The protein localises to the cytosol. The enzyme catalyses estrone + 3'-phosphoadenylyl sulfate = estrone 3-sulfate + adenosine 3',5'-bisphosphate + H(+). It carries out the reaction (24S)-hydroxycholesterol + 3'-phosphoadenylyl sulfate = (24S)-hydroxycholesterol 3-sulfate + adenosine 3',5'-bisphosphate + H(+). It catalyses the reaction 17beta-estradiol + 3'-phosphoadenylyl sulfate = 17beta-estradiol 3-sulfate + adenosine 3',5'-bisphosphate + H(+). The catalysed reaction is 3beta-hydroxyandrost-5-en-17-one + 3'-phosphoadenylyl sulfate = dehydroepiandrosterone 3-sulfate + adenosine 3',5'-bisphosphate + H(+). The enzyme catalyses 4-ethylphenol + 3'-phosphoadenylyl sulfate = 4-ethylphenyl sulfate + adenosine 3',5'-bisphosphate + H(+). Its activity is regulated as follows. Inhibited by estradiol. Functionally, sulfotransferase that utilizes 3'-phospho-5'-adenylyl sulfate (PAPS) as sulfonate donor to catalyze the sulfate conjugation of estradiol and estrone. Is a key enzyme in estrogen homeostasis, the sulfation of estrogens leads to their inactivation. Also sulfates dehydroepiandrosterone (DHEA), pregnenolone, (24S)-hydroxycholesterol and xenobiotic compounds like ethinylestradiol, equalenin, diethyl stilbesterol and 1-naphthol at significantly lower efficiency. Does not sulfonate cortisol, testosterone and dopamine. May play a role in gut microbiota-host metabolic interaction. O-sulfonates 4-ethylphenol (4-EP), a dietary tyrosine-derived metabolite produced by gut bacteria. The product 4-EPS crosses the blood-brain barrier and may negatively regulate oligodendrocyte maturation and myelination, affecting the functional connectivity of different brain regions associated with the limbic system. The polypeptide is Sulfotransferase 1E1 (SULT1E1) (Bos taurus (Bovine)).